Here is a 554-residue protein sequence, read N- to C-terminus: Membrane protein insertase YidC (554 aa).

The next 5 membrane-spanning stretches (helical) occupy residues 7–24, 362–382, 436–456, 475–495, and 510–530; these read VLWV…DNWQ, FVGN…AVFF, LPVV…LASV, PFFI…SLNP, and PIAF…YYVV.

This sequence belongs to the OXA1/ALB3/YidC family. Type 1 subfamily. Interacts with the Sec translocase complex via SecD. Specifically interacts with transmembrane segments of nascent integral membrane proteins during membrane integration.

The protein resides in the cell inner membrane. Required for the insertion and/or proper folding and/or complex formation of integral membrane proteins into the membrane. Involved in integration of membrane proteins that insert both dependently and independently of the Sec translocase complex, as well as at least some lipoproteins. Aids folding of multispanning membrane proteins. This Burkholderia ambifaria (strain MC40-6) protein is Membrane protein insertase YidC.